Reading from the N-terminus, the 1026-residue chain is Multidrug resistance protein MdtC (1026 aa).

A run of 11 helical transmembrane segments spans residues 15–35, 333–353, 360–380, 387–407, 431–451, 463–483, 528–548, 853–873, 897–917, 953–973, and 984–1004; these read ILIA…LPVA, EVEE…FLFL, LIPA…MYLC, LSLM…IVVL, VGFT…PLLL, FAVT…TLTP, LVGV…IAIP, LILI…LYES, LFNA…IGIV, PIMM…LSDG, and ITIV…TPVV.

Belongs to the resistance-nodulation-cell division (RND) (TC 2.A.6) family. MdtC subfamily. In terms of assembly, part of a tripartite efflux system composed of MdtA, MdtB and MdtC. MdtC forms a heteromultimer with MdtB.

It localises to the cell inner membrane. This Salmonella paratyphi B (strain ATCC BAA-1250 / SPB7) protein is Multidrug resistance protein MdtC.